The following is a 210-amino-acid chain: Thymidylate kinase (210 aa).

ATP is bound at residue 10–17 (GPDGAGKT).

This sequence belongs to the thymidylate kinase family.

The catalysed reaction is dTMP + ATP = dTDP + ADP. In terms of biological role, phosphorylation of dTMP to form dTDP in both de novo and salvage pathways of dTTP synthesis. This chain is Thymidylate kinase, found in Geobacillus sp. (strain WCH70).